Reading from the N-terminus, the 689-residue chain is Acyl-coenzyme A oxidase 1 (689 aa).

FAD-binding residues include T149 and G188. E444 acts as the Proton acceptor in catalysis.

It belongs to the acyl-CoA oxidase family. In terms of assembly, heteropentamer composed of five different subunits. Requires FAD as cofactor.

It localises to the peroxisome. The catalysed reaction is a 2,3-saturated acyl-CoA + O2 = a (2E)-enoyl-CoA + H2O2. Its pathway is lipid metabolism; peroxisomal fatty acid beta-oxidation. This is Acyl-coenzyme A oxidase 1 (POX1) from Yarrowia lipolytica (strain CLIB 122 / E 150) (Yeast).